Reading from the N-terminus, the 123-residue chain is Small ribosomal subunit protein uS8 (123 aa).

Belongs to the universal ribosomal protein uS8 family. Part of the 30S ribosomal subunit. Contacts proteins S5 and S12.

Its function is as follows. One of the primary rRNA binding proteins, it binds directly to 16S rRNA central domain where it helps coordinate assembly of the platform of the 30S subunit. In Carsonella ruddii (strain PV), this protein is Small ribosomal subunit protein uS8 (rpsH).